A 155-amino-acid polypeptide reads, in one-letter code: Fibroblast growth factor 1 (155 aa).

Ala-2 carries the N-acetylalanine modification. Residues 2–15 (AEGEITTFSALTER) constitute a propeptide that is removed on maturation. Asn-33 contributes to the heparin binding site. The heparin-binding stretch occupies residues 127–143 (KKNGSCKRGPRTHYGQK).

Belongs to the heparin-binding growth factors family. Monomer. Homodimer. Interacts with FGFR1, FGFR2, FGFR3 and FGFR4. Affinity between fibroblast growth factors (FGFs) and their receptors is increased by heparan sulfate glycosaminoglycans that function as coreceptors. Found in a complex with FGFBP1, FGF1 and FGF2. Interacts with FGFBP1. Part of a Cu(2+)-dependent multiprotein aggregate containing FGF1, S100A13 and SYT1. Interacts with SYT1. Interacts with S100A13. Interacts with LRRC59. Interacts with CSNKA, CSNKB and FIBP. While binding with LRRC59, CSNKA and FIBP seem mutually exclusive, CSNKB and FIBP may cooperatively interact with FGF1. Forms a ternary complex with FGFR1 and ITGAV:ITGB3 and induces the recruitment of PTPN11 to the complex. Post-translationally, in the nucleus, phosphorylated by PKC/PRKCD.

Its subcellular location is the secreted. It is found in the cytoplasm. The protein resides in the cell cortex. The protein localises to the cytosol. It localises to the nucleus. In terms of biological role, plays an important role in the regulation of cell survival, cell division, angiogenesis, cell differentiation and cell migration. Functions as a potent mitogen in vitro. Acts as a ligand for FGFR1 and integrins. Binds to FGFR1 in the presence of heparin leading to FGFR1 dimerization and activation via sequential autophosphorylation on tyrosine residues which act as docking sites for interacting proteins, leading to the activation of several signaling cascades. Binds to integrin ITGAV:ITGB3. Its binding to integrin, subsequent ternary complex formation with integrin and FGFR1, and the recruitment of PTPN11 to the complex are essential for FGF1 signaling. Induces the phosphorylation and activation of FGFR1, FRS2, MAPK3/ERK1, MAPK1/ERK2 and AKT1. Can induce angiogenesis. This chain is Fibroblast growth factor 1 (FGF1), found in Mesocricetus auratus (Golden hamster).